Here is a 399-residue protein sequence, read N- to C-terminus: S-adenosylmethionine synthase (399 aa).

Histidine 17 serves as a coordination point for ATP. Aspartate 19 serves as a coordination point for Mg(2+). Glutamate 52 is a binding site for K(+). L-methionine-binding residues include glutamate 65 and glutamine 109. The interval 109–119 (QSADIAQGVDA) is flexible loop. Residues 177–179 (DSK), 243–244 (KF), aspartate 252, 258–259 (RK), alanine 275, and lysine 279 contribute to the ATP site. Position 252 (aspartate 252) interacts with L-methionine. Lysine 283 is a binding site for L-methionine.

This sequence belongs to the AdoMet synthase family. Homotetramer; dimer of dimers. Requires Mg(2+) as cofactor. It depends on K(+) as a cofactor.

Its subcellular location is the cytoplasm. The catalysed reaction is L-methionine + ATP + H2O = S-adenosyl-L-methionine + phosphate + diphosphate. Its pathway is amino-acid biosynthesis; S-adenosyl-L-methionine biosynthesis; S-adenosyl-L-methionine from L-methionine: step 1/1. Functionally, catalyzes the formation of S-adenosylmethionine (AdoMet) from methionine and ATP. The overall synthetic reaction is composed of two sequential steps, AdoMet formation and the subsequent tripolyphosphate hydrolysis which occurs prior to release of AdoMet from the enzyme. In Bradyrhizobium sp. (strain BTAi1 / ATCC BAA-1182), this protein is S-adenosylmethionine synthase.